We begin with the raw amino-acid sequence, 825 residues long: IQ and AAA domain-containing protein 1-like (825 aa).

The region spanning 206–235 (RDQGAIVIQKVWKGYLQRKRIEQDRRVEME) is the IQ domain. Positions 344–366 (QAQESRKKDQEKKEKNKEKEKEK) are enriched in basic and acidic residues. Disordered regions lie at residues 344 to 378 (QAQESRKKDQEKKEKNKEKEKEKKEKKKKKVKEEK) and 459 to 487 (DREETRPLKSPKKKGGKKSGKKKKEKDLT). Basic residues predominate over residues 467–482 (KSPKKKGGKKSGKKKK). 572–579 (GPSGMGKK) contacts ATP.

The protein belongs to the AAA ATPase family.

The chain is IQ and AAA domain-containing protein 1-like (Iqca1l) from Mus musculus (Mouse).